A 119-amino-acid chain; its full sequence is Small ribosomal subunit protein bS6 (119 aa).

Residues Val-96–Ala-119 form a disordered region.

This sequence belongs to the bacterial ribosomal protein bS6 family.

Its function is as follows. Binds together with bS18 to 16S ribosomal RNA. The protein is Small ribosomal subunit protein bS6 of Alkalilimnicola ehrlichii (strain ATCC BAA-1101 / DSM 17681 / MLHE-1).